The primary structure comprises 265 residues: Tryptophan synthase alpha chain (265 aa).

Catalysis depends on proton acceptor residues E48 and D59.

Belongs to the TrpA family. As to quaternary structure, tetramer of two alpha and two beta chains.

It catalyses the reaction (1S,2R)-1-C-(indol-3-yl)glycerol 3-phosphate + L-serine = D-glyceraldehyde 3-phosphate + L-tryptophan + H2O. It functions in the pathway amino-acid biosynthesis; L-tryptophan biosynthesis; L-tryptophan from chorismate: step 5/5. Functionally, the alpha subunit is responsible for the aldol cleavage of indoleglycerol phosphate to indole and glyceraldehyde 3-phosphate. The polypeptide is Tryptophan synthase alpha chain (Pelagibacter ubique (strain HTCC1062)).